Consider the following 1099-residue polypeptide: Carbamoyl phosphate synthase large chain (1099 aa).

Residues 1-402 (MPKREDIKRI…ALGKALRSLE (402 aa)) form a carboxyphosphate synthetic domain region. Residues Arg-129, Arg-169, Gly-175, Gly-176, Glu-208, Val-210, Glu-215, Gly-241, Ile-242, His-243, Gln-285, and Glu-299 each coordinate ATP. The ATP-grasp 1 domain occupies 133 to 328 (KETMEKAGLE…IAKVAALLAV (196 aa)). 3 residues coordinate Mg(2+): Gln-285, Glu-299, and Asn-301. 3 residues coordinate Mn(2+): Gln-285, Glu-299, and Asn-301. The segment at 403–541 (LDAAPKLDLE…STYNGVENEA (139 aa)) is oligomerization domain. The carbamoyl phosphate synthetic domain stretch occupies residues 542 to 944 (VPSDREKIMI…AFAKAQIAAG (403 aa)). The 192-residue stretch at 666 to 857 (AKLLKQIGLK…VARIAAKIMV (192 aa)) folds into the ATP-grasp 2 domain. Positions 702, 741, 743, 748, 773, 774, 775, 776, 816, and 828 each coordinate ATP. The Mg(2+) site is built by Gln-816, Glu-828, and Asn-830. Residues Gln-816, Glu-828, and Asn-830 each contribute to the Mn(2+) site. An MGS-like domain is found at 945–1099 (NPLPTTGAIL…VRRLTDTWKM (155 aa)). The tract at residues 945 to 1099 (NPLPTTGAIL…VRRLTDTWKM (155 aa)) is allosteric domain.

The protein belongs to the CarB family. In terms of assembly, composed of two chains; the small (or glutamine) chain promotes the hydrolysis of glutamine to ammonia, which is used by the large (or ammonia) chain to synthesize carbamoyl phosphate. Tetramer of heterodimers (alpha,beta)4. It depends on Mg(2+) as a cofactor. Mn(2+) is required as a cofactor.

It carries out the reaction hydrogencarbonate + L-glutamine + 2 ATP + H2O = carbamoyl phosphate + L-glutamate + 2 ADP + phosphate + 2 H(+). The enzyme catalyses hydrogencarbonate + NH4(+) + 2 ATP = carbamoyl phosphate + 2 ADP + phosphate + 2 H(+). The protein operates within amino-acid biosynthesis; L-arginine biosynthesis; carbamoyl phosphate from bicarbonate: step 1/1. It participates in pyrimidine metabolism; UMP biosynthesis via de novo pathway; (S)-dihydroorotate from bicarbonate: step 1/3. In terms of biological role, large subunit of the glutamine-dependent carbamoyl phosphate synthetase (CPSase). CPSase catalyzes the formation of carbamoyl phosphate from the ammonia moiety of glutamine, carbonate, and phosphate donated by ATP, constituting the first step of 2 biosynthetic pathways, one leading to arginine and/or urea and the other to pyrimidine nucleotides. The large subunit (synthetase) binds the substrates ammonia (free or transferred from glutamine from the small subunit), hydrogencarbonate and ATP and carries out an ATP-coupled ligase reaction, activating hydrogencarbonate by forming carboxy phosphate which reacts with ammonia to form carbamoyl phosphate. The protein is Carbamoyl phosphate synthase large chain of Thermotoga sp. (strain RQ2).